The primary structure comprises 144 residues: Crossover junction endodeoxyribonuclease Hjc (144 aa).

Residue glutamate 12 participates in Mg(2+) binding. Serine 32 is a catalytic residue. Mg(2+) is bound by residues aspartate 42 and glutamate 55.

The protein belongs to the Holliday junction resolvase Hjc family. As to quaternary structure, homodimer; forms a 2:1 complex with Hel308 (Hjm). May form a complex with Holliday junction DNA, Hjc and Hjm. Mg(2+) is required as a cofactor.

It carries out the reaction Endonucleolytic cleavage at a junction such as a reciprocal single-stranded crossover between two homologous DNA duplexes (Holliday junction).. Cleavage stimulated by PCNA123 and PCNA323 and by RadC2. Functionally, a structure-specific endonuclease that resolves Holliday junction (HJ) intermediates during genetic recombination. Cleaves 4-way DNA junctions introducing paired nicks in opposing strands, leaving a 5'-terminal phosphate and a 3'-terminal hydroxyl group that are subsequently ligated to produce recombinant products. Inhibits the helicase activity of Hel308 (Hjm). This is Crossover junction endodeoxyribonuclease Hjc from Sulfurisphaera tokodaii (strain DSM 16993 / JCM 10545 / NBRC 100140 / 7) (Sulfolobus tokodaii).